We begin with the raw amino-acid sequence, 2042 residues long: Cell adhesion molecule DSCAML1 (2042 aa).

The signal sequence occupies residues Met-1–Thr-17. Topologically, residues Glu-18–Lys-1592 are extracellular. Asn-28 and Asn-78 each carry an N-linked (GlcNAc...) asparagine glycan. 9 consecutive Ig-like C2-type domains span residues Ser-37 to Ser-107, Pro-114 to Ser-216, Pro-227 to Thr-311, Pro-315 to Thr-403, Pro-409 to Asn-502, Pro-507 to Ser-587, Pro-597 to Ile-686, Pro-691 to Thr-785, and Pro-789 to Gln-886. Intrachain disulfides connect Cys-46-Cys-102, Cys-145-Cys-197, Cys-248-Cys-295, Cys-337-Cys-387, and Cys-430-Cys-486. N-linked (GlcNAc...) asparagine glycans are attached at residues Asn-369, Asn-472, Asn-514, Asn-557, Asn-667, Asn-711, Asn-750, Asn-797, and Asn-810. 2 disulfide bridges follow: Cys-527–Cys-576 and Cys-618–Cys-670. A disulfide bond links Cys-712 and Cys-768. A disulfide bond links Cys-811 and Cys-868. Fibronectin type-III domains are found at residues Pro-888–Ala-985, Pro-990–Asp-1089, Pro-1094–Asp-1190, and Pro-1194–Ala-1289. N-linked (GlcNAc...) asparagine glycosylation is found at Asn-927, Asn-1083, Asn-1145, Asn-1163, Asn-1276, and Asn-1346. In terms of domain architecture, Ig-like C2-type 10 spans Glu-1279 to Asn-1368. A disulfide bond links Cys-1312 and Cys-1364. Fibronectin type-III domains lie at Pro-1384 to Arg-1478 and Glu-1479 to Pro-1579. Asn-1493, Asn-1532, and Asn-1562 each carry an N-linked (GlcNAc...) asparagine glycan. Residues Leu-1593 to Ile-1613 form a helical membrane-spanning segment. The Cytoplasmic portion of the chain corresponds to Arg-1614–Val-2042. 4 disordered regions span residues Pro-1716–Arg-1742, Ser-1781–Ala-1805, Ser-1841–Pro-1865, and Pro-1940–Val-2042. Positions Lys-1733–Arg-1742 are enriched in basic residues. Polar residues-rich tracts occupy residues Ser-1781–Gln-1790 and Ser-1841–Ser-1863. Positions Ala-1951–Ser-1960 are enriched in pro residues. Residues Ser-1961–Pro-1983 show a composition bias toward low complexity. Residues Ala-1984 to Pro-1995 show a composition bias toward pro residues. Low complexity-rich tracts occupy residues Pro-1996–Thr-2005 and Gly-2023–Ala-2034.

Homodimer; mediates homophilic interactions to promote cell adhesion. SDK1, SDK2, DSCAM and DSCAML1 are expressed in non-overlapping subsets of interneurons and retinal ganglion cells (RGCs) that form synapses in distinct inner plexiform layer (IPL) sublaminae.

It localises to the cell membrane. It is found in the synapse. Cell adhesion molecule that plays a role in neuronal self-avoidance. Promotes repulsion between specific neuronal processes of either the same cell or the same subtype of cells. Adhesion molecule that promotes lamina-specific synaptic connections in the retina: expressed in specific subsets of interneurons and retinal ganglion cells (RGCs) and promotes synaptic connectivity via homophilic interactions. This Gallus gallus (Chicken) protein is Cell adhesion molecule DSCAML1 (DSCAML1).